The primary structure comprises 1004 residues: Hyaluronate lyase HylB (1004 aa).

Positions 1–29 are cleaved as a signal peptide; sequence MKNRKIWVMLVGLFTALTNGFMGTTLTFA. Catalysis depends on residues His468, Tyr477, and Arg531.

This sequence belongs to the polysaccharide lyase 8 family.

The protein resides in the secreted. It carries out the reaction [hyaluronan](n) = n 3-(4-deoxy-beta-D-gluc-4-enuronosyl)-N-acetyl-D-glucosamine + H2O. It catalyses the reaction Eliminative degradation of polysaccharides containing 1,4-beta-D-hexosaminyl and 1,3-beta-D-glucuronosyl linkages to disaccharides containing 4-deoxy-beta-D-gluc-4-enuronosyl groups.. Functionally, degrades hyaluronic acid (HA) and chondroitin sulfate (CS) A in vitro. Is not active against heparin sodium salt (HS). Involved in the pathogenesis of vancomycin-resistant E.faecalis infections. Contributes to attenuation of the lipopolysaccharide (LPS)-mediated nuclear factor (NF)-kappa-B activation assayed in the mouse RAW-Blue reporter macrophages. The chain is Hyaluronate lyase HylB from Enterococcus faecalis (strain ATCC 700802 / V583).